The sequence spans 165 residues: Adenosine 5'-monophosphoramidase HINT3 (165 aa).

The disordered stretch occupies residues 1–23; the sequence is MAEKQAGLVGEPDPEGSSPGTSE. A2 is modified (N-acetylalanine). The HIT domain occupies 32–143; sequence VFCRVAAGQE…PVKEFGFLSK (112 aa). AMP is bound by residues 59-60 and 128-130; these read DI and HLH. The Histidine triad motif signature appears at 126 to 130; the sequence is HLHLH. The Tele-AMP-histidine intermediate role is filled by H128.

This sequence belongs to the HINT family. As to quaternary structure, forms dimers to octamers and even larger oligomer. Interacts with CALM1.

It localises to the cytoplasm. It is found in the nucleus. It catalyses the reaction adenosine 5'-phosphoramidate + H2O = AMP + NH4(+). Exhibits adenosine 5'-monophosphoramidase activity, hydrolyzing purine nucleotide phosphoramidates with a single phosphate group such as adenosine 5'monophosphoramidate (AMP-NH2) to yield AMP and NH2. Hydrolyzes lysyl-AMP (AMP-N-epsilon-(N-alpha-acetyl lysine methyl ester)) generated by lysine tRNA ligase. In Mus musculus (Mouse), this protein is Adenosine 5'-monophosphoramidase HINT3 (Hint3).